We begin with the raw amino-acid sequence, 359 residues long: RNA-binding protein 4B (359 aa).

RRM domains follow at residues 2–72 (VKLF…ASKN) and 78–148 (TKLH…LSTS). The CCHC-type zinc-finger motif lies at 160–177 (SGCYRCGKEGHWSKECPV). The interval 196–359 (AVRTPYTMGY…YVDRARYSAF (164 aa)) is interaction with TNPO3.

Interacts with TNPO3, which may mediate nuclear import of the protein. In terms of tissue distribution, expressed in liver and kidney (at protein level). Ubiquitously expressed.

Its subcellular location is the nucleus. The protein localises to the nucleolus. Required for the translational activation of PER1 mRNA in response to circadian clock. Binds directly to the 3'-UTR of the PER1 mRNA. The chain is RNA-binding protein 4B (RBM4B) from Homo sapiens (Human).